Consider the following 884-residue polypeptide: Valine--tRNA ligase (884 aa).

The 'HIGH' region signature appears at 46-56; that stretch reads PNVTGKLHLGH. The short motif at 520-524 is the 'KMSKS' region element; the sequence is KMSKS. Lysine 523 contacts ATP. Residues 809–844 are a coiled coil; it reads LADLLNVEEELARLEKELAKWQKELNMVGKKLSNER.

It belongs to the class-I aminoacyl-tRNA synthetase family. ValS type 1 subfamily. In terms of assembly, monomer.

The protein resides in the cytoplasm. It carries out the reaction tRNA(Val) + L-valine + ATP = L-valyl-tRNA(Val) + AMP + diphosphate. Functionally, catalyzes the attachment of valine to tRNA(Val). As ValRS can inadvertently accommodate and process structurally similar amino acids such as threonine, to avoid such errors, it has a 'posttransfer' editing activity that hydrolyzes mischarged Thr-tRNA(Val) in a tRNA-dependent manner. The protein is Valine--tRNA ligase of Streptococcus agalactiae serotype Ia (strain ATCC 27591 / A909 / CDC SS700).